Reading from the N-terminus, the 819-residue chain is Probable phosphoenolpyruvate synthase (819 aa).

Histidine 441 acts as the Tele-phosphohistidine intermediate in catalysis. Residues arginine 540, arginine 587, glutamate 684, glycine 706, threonine 707, asparagine 708, and aspartate 709 each coordinate substrate. Residue glutamate 684 participates in Mg(2+) binding. Aspartate 709 contacts Mg(2+). Residue cysteine 756 is the Proton donor of the active site.

It belongs to the PEP-utilizing enzyme family. Mg(2+) is required as a cofactor.

The enzyme catalyses pyruvate + ATP + H2O = phosphoenolpyruvate + AMP + phosphate + 2 H(+). It participates in carbohydrate biosynthesis; gluconeogenesis. Its function is as follows. Catalyzes the phosphorylation of pyruvate to phosphoenolpyruvate. This chain is Probable phosphoenolpyruvate synthase (ppsA), found in Pyrococcus abyssi (strain GE5 / Orsay).